Here is a 432-residue protein sequence, read N- to C-terminus: Glutamyl-tRNA reductase (432 aa).

Residues 49 to 52 (TCNR), S109, 114 to 116 (EGQ), and Q120 each bind substrate. Residue C50 is the Nucleophile of the active site. 198–203 (GAGRMS) is an NADP(+) binding site.

The protein belongs to the glutamyl-tRNA reductase family. Homodimer.

It catalyses the reaction (S)-4-amino-5-oxopentanoate + tRNA(Glu) + NADP(+) = L-glutamyl-tRNA(Glu) + NADPH + H(+). Its pathway is porphyrin-containing compound metabolism; protoporphyrin-IX biosynthesis; 5-aminolevulinate from L-glutamyl-tRNA(Glu): step 1/2. The protein operates within porphyrin-containing compound metabolism; chlorophyll biosynthesis. Catalyzes the NADPH-dependent reduction of glutamyl-tRNA(Glu) to glutamate 1-semialdehyde (GSA). The sequence is that of Glutamyl-tRNA reductase from Parasynechococcus marenigrum (strain WH8102).